Consider the following 333-residue polypeptide: Phosphate acetyltransferase (333 aa).

The protein belongs to the phosphate acetyltransferase and butyryltransferase family. In terms of assembly, homodimer.

The protein localises to the cell membrane. The catalysed reaction is acetyl-CoA + phosphate = acetyl phosphate + CoA. The protein operates within metabolic intermediate biosynthesis; acetyl-CoA biosynthesis; acetyl-CoA from acetate: step 2/2. The protein is Phosphate acetyltransferase (pta) of Methanosarcina thermophila.